The chain runs to 145 residues: D-aminoacyl-tRNA deacylase (145 aa).

The Gly-cisPro motif, important for rejection of L-amino acids signature appears at 137-138 (GP).

This sequence belongs to the DTD family. Homodimer.

The protein localises to the cytoplasm. It carries out the reaction glycyl-tRNA(Ala) + H2O = tRNA(Ala) + glycine + H(+). The catalysed reaction is a D-aminoacyl-tRNA + H2O = a tRNA + a D-alpha-amino acid + H(+). Functionally, an aminoacyl-tRNA editing enzyme that deacylates mischarged D-aminoacyl-tRNAs. Also deacylates mischarged glycyl-tRNA(Ala), protecting cells against glycine mischarging by AlaRS. Acts via tRNA-based rather than protein-based catalysis; rejects L-amino acids rather than detecting D-amino acids in the active site. By recycling D-aminoacyl-tRNA to D-amino acids and free tRNA molecules, this enzyme counteracts the toxicity associated with the formation of D-aminoacyl-tRNA entities in vivo and helps enforce protein L-homochirality. This Cereibacter sphaeroides (strain ATCC 17029 / ATH 2.4.9) (Rhodobacter sphaeroides) protein is D-aminoacyl-tRNA deacylase.